A 162-amino-acid chain; its full sequence is 2-C-methyl-D-erythritol 2,4-cyclodiphosphate synthase (162 aa).

Residues D9 and H11 each coordinate a divalent metal cation. 4-CDP-2-C-methyl-D-erythritol 2-phosphate is bound by residues 9–11 and 35–36; these read DVH and HS. Position 43 (H43) interacts with a divalent metal cation. Residues 57 to 59, 62 to 66, 133 to 136, F140, and R143 contribute to the 4-CDP-2-C-methyl-D-erythritol 2-phosphate site; these read DIG, FPDTD, and TTTE.

The protein belongs to the IspF family. As to quaternary structure, homotrimer. Requires a divalent metal cation as cofactor.

It catalyses the reaction 4-CDP-2-C-methyl-D-erythritol 2-phosphate = 2-C-methyl-D-erythritol 2,4-cyclic diphosphate + CMP. It functions in the pathway isoprenoid biosynthesis; isopentenyl diphosphate biosynthesis via DXP pathway; isopentenyl diphosphate from 1-deoxy-D-xylulose 5-phosphate: step 4/6. Involved in the biosynthesis of isopentenyl diphosphate (IPP) and dimethylallyl diphosphate (DMAPP), two major building blocks of isoprenoid compounds. Catalyzes the conversion of 4-diphosphocytidyl-2-C-methyl-D-erythritol 2-phosphate (CDP-ME2P) to 2-C-methyl-D-erythritol 2,4-cyclodiphosphate (ME-CPP) with a corresponding release of cytidine 5-monophosphate (CMP). In Histophilus somni (strain 2336) (Haemophilus somnus), this protein is 2-C-methyl-D-erythritol 2,4-cyclodiphosphate synthase.